Here is a 577-residue protein sequence, read N- to C-terminus: Acyl-coenzyme A synthetase ACSM1, mitochondrial (577 aa).

The transit peptide at 1–31 (MQWLMRFRTLWGIHKSFHNIHPAPSQLRCRS) directs the protein to the mitochondrion. An N6-succinyllysine modification is found at K85. K146 carries the N6-acetyllysine; alternate modification. Position 146 is an N6-succinyllysine; alternate (K146). At K183 the chain carries N6-succinyllysine. An N6-acetyllysine; alternate modification is found at K204. K204 is modified (N6-succinyllysine; alternate). Position 214 is an N6-acetyllysine (K214). ATP is bound at residue 226–234 (TSGTTGFPK). K237 is subject to N6-succinyllysine. K356 and K391 each carry N6-acetyllysine; alternate. 2 positions are modified to N6-succinyllysine; alternate: K356 and K391. 2 residues coordinate ATP: D452 and R467. K531 carries the N6-acetyllysine modification. N6-acetyllysine; alternate is present on K538. K538 carries the post-translational modification N6-succinyllysine; alternate. K549 is modified (N6-acetyllysine). K563 is a binding site for ATP.

This sequence belongs to the ATP-dependent AMP-binding enzyme family. Monomer. The cofactor is Mg(2+). Mn(2+) is required as a cofactor.

It is found in the mitochondrion matrix. The protein resides in the mitochondrion. It carries out the reaction a medium-chain fatty acid + ATP + CoA = a medium-chain fatty acyl-CoA + AMP + diphosphate. It catalyses the reaction benzoate + ATP + CoA = benzoyl-CoA + AMP + diphosphate. The catalysed reaction is (R)-lipoate + GTP + H(+) = (R)-lipoyl-GMP + diphosphate. The enzyme catalyses octanoate + ATP + CoA = octanoyl-CoA + AMP + diphosphate. It carries out the reaction decanoate + ATP + CoA = decanoyl-CoA + AMP + diphosphate. It catalyses the reaction dodecanoate + ATP + CoA = dodecanoyl-CoA + AMP + diphosphate. The catalysed reaction is tetradecanoate + ATP + CoA = tetradecanoyl-CoA + AMP + diphosphate. The enzyme catalyses hexanoate + ATP + CoA = hexanoyl-CoA + AMP + diphosphate. It carries out the reaction butanoate + ATP + CoA = butanoyl-CoA + AMP + diphosphate. It catalyses the reaction hexadecanoate + ATP + CoA = hexadecanoyl-CoA + AMP + diphosphate. With respect to regulation, activated by monovalent cations, such as potassium, rubidium or ammonium. Its function is as follows. Catalyzes the activation of fatty acids by CoA to produce an acyl-CoA, the first step in fatty acid metabolism. Capable of activating medium-chain fatty acids (e.g. butyric (C4) to decanoic (C10) acids), and certain carboxylate-containing xenobiotics, e.g. benzoate. Also catalyzes the activation of lipoate to lipoyl-nucleoside monophosphate. Activates lipoate with GTP at a 1000-fold higher rate than with ATP and activates both (R)- and (S)-lipoate to the respective lipoyl-GMP, with a preference for (R)-lipoate. The chain is Acyl-coenzyme A synthetase ACSM1, mitochondrial (ACSM1) from Homo sapiens (Human).